The chain runs to 275 residues: Large ribosomal subunit protein uL2 (275 aa).

2 disordered regions span residues 28–48 and 223–275; these read KPYA…NNGR and VVMN…RNKK.

This sequence belongs to the universal ribosomal protein uL2 family. As to quaternary structure, part of the 50S ribosomal subunit. Forms a bridge to the 30S subunit in the 70S ribosome.

Its function is as follows. One of the primary rRNA binding proteins. Required for association of the 30S and 50S subunits to form the 70S ribosome, for tRNA binding and peptide bond formation. It has been suggested to have peptidyltransferase activity; this is somewhat controversial. Makes several contacts with the 16S rRNA in the 70S ribosome. The chain is Large ribosomal subunit protein uL2 from Photobacterium profundum (strain SS9).